The primary structure comprises 104 residues: Large ribosomal subunit protein eL42 (104 aa).

Positions Lys-22 to Leu-56 are disordered.

The protein belongs to the eukaryotic ribosomal protein eL42 family.

The polypeptide is Large ribosomal subunit protein eL42 (RPL44) (Encephalitozoon cuniculi (strain GB-M1) (Microsporidian parasite)).